The following is a 272-amino-acid chain: Glutamate racemase (272 aa).

Substrate-binding positions include Asp-9–Ser-10 and Tyr-41–Gly-42. The active-site Proton donor/acceptor is the Cys-73. Residue Asn-74–Thr-75 participates in substrate binding. Cys-183 serves as the catalytic Proton donor/acceptor. Position 184-185 (Thr-184–His-185) interacts with substrate.

This sequence belongs to the aspartate/glutamate racemases family.

It catalyses the reaction L-glutamate = D-glutamate. It functions in the pathway cell wall biogenesis; peptidoglycan biosynthesis. Its function is as follows. Provides the (R)-glutamate required for cell wall biosynthesis. The protein is Glutamate racemase of Shewanella sp. (strain MR-7).